We begin with the raw amino-acid sequence, 236 residues long: Putative protein ZBED10P (236 aa).

The polypeptide is Putative protein ZBED10P (Homo sapiens (Human)).